Here is a 354-residue protein sequence, read N- to C-terminus: Uroporphyrinogen decarboxylase (354 aa).

Substrate is bound by residues 27-31, Asp77, Tyr154, Ser209, and His327; that span reads RQAGR.

The protein belongs to the uroporphyrinogen decarboxylase family. In terms of assembly, homodimer.

Its subcellular location is the cytoplasm. The enzyme catalyses uroporphyrinogen III + 4 H(+) = coproporphyrinogen III + 4 CO2. The protein operates within porphyrin-containing compound metabolism; protoporphyrin-IX biosynthesis; coproporphyrinogen-III from 5-aminolevulinate: step 4/4. In terms of biological role, catalyzes the decarboxylation of four acetate groups of uroporphyrinogen-III to yield coproporphyrinogen-III. The polypeptide is Uroporphyrinogen decarboxylase (Shewanella amazonensis (strain ATCC BAA-1098 / SB2B)).